A 756-amino-acid polypeptide reads, in one-letter code: Cholesterol uptake protein 1 (756 aa).

The signal sequence occupies residues 1–18; the sequence is MRTSQAIFILIFLDSVRN. Residues 19–268 lie on the Extracellular side of the membrane; the sequence is QSPQVIPAKW…TIESSMKIFD (250 aa). N-linked (GlcNAc...) asparagine glycosylation is found at Asn39 and Asn63. Positions 124-129 match the Cholesterol-binding sequence motif motif; that stretch reads VHYNFR. Residues Asn140, Asn174, and Asn257 are each glycosylated (N-linked (GlcNAc...) asparagine). A helical membrane pass occupies residues 269–289; sequence YTIPIVFWACILLLVTIVVFV. Residues 290–373 lie on the Cytoplasmic side of the membrane; sequence YHYFDGIWER…YEERELKYDV (84 aa). The chain crosses the membrane as a helical span at residues 374–394; sequence YKIALAIIGIFYNITVLQLII. Topologically, residues 395-421 are extracellular; the sequence is SKAGSLRQSGDLDECTFNFQCARPLWY. Residues 422-442 traverse the membrane as a helical segment; it reads FVAFNNVVSNGGYVYFGTLII. The Cytoplasmic segment spans residues 443–473; it reads VMNYCRERSFRRLFAVQPTLAERYGLPQHSG. The chain crosses the membrane as a helical span at residues 474-494; the sequence is LMTAIGLAVIMEGISSATYHV. At 495 to 498 the chain is on the extracellular side; sequence CPNN. The chain crosses the membrane as a helical span at residues 499–517; the sequence is INYQFDTALMYVIGMLGKL. The Cytoplasmic segment spans residues 518 to 530; the sequence is KIWSLRHPDMVVS. The helical transmembrane segment at 531-551 threads the bilayer; it reads AYHAFGFLGVFLMAAIAGVYV. Residues 552 to 554 are Extracellular-facing; it reads HNM. A helical membrane pass occupies residues 555–575; the sequence is IFWALFSIIYIASMLLVSLEF. The Cholesterol-binding sequence motif motif lies at 570–578; that stretch reads LVSLEFYFK. The Cytoplasmic portion of the chain corresponds to 576-612; the sequence is YFKGIWTLNLRELRNSIRLSWVSSRHLSCVVPAYKAR. The chain crosses the membrane as a helical span at residues 613–633; sequence FFVILLLNIANTAVVVYGLEA. The Extracellular portion of the chain corresponds to 634 to 637; the sequence is HPKD. Residues 638–658 form a helical membrane-spanning segment; it reads FLSFLLIPFIGNLFIYIIYYI. Residues 659–671 are Cytoplasmic-facing; it reads LMKMIYREKIPKR. The chain crosses the membrane as a helical span at residues 672–692; sequence AIALLFAAVISWTCAGILFNQ. The Extracellular portion of the chain corresponds to 693 to 728; it reads RVSDWSKMPAISRELNKPCIFLNFYDNHDLWHLSSA. The chain crosses the membrane as a helical span at residues 729–749; it reads FAIFFSFTAINVIDDDLMFVM. The Cytoplasmic segment spans residues 750–756; it reads RNTIRVF.

Belongs to the SID1 family. In terms of tissue distribution, highly expressed along the intestine with expression also detected in the pharynx, especially at the terminal bulb, and in the excretory gland cells.

The protein localises to the cell membrane. The catalysed reaction is cholesterol(in) = cholesterol(out). Cholesterol-binding protein which is involved in dietary cholesterol uptake from the environment. Does not play a role in double-stranded RNA transport in contrast to other SID1 family members. This Caenorhabditis elegans protein is Cholesterol uptake protein 1.